A 127-amino-acid polypeptide reads, in one-letter code: Glycine cleavage system H protein (127 aa).

The Lipoyl-binding domain occupies 22-103; it reads EAYIGITDFA…AFANWIIKVE (82 aa). Lys63 is subject to N6-lipoyllysine.

This sequence belongs to the GcvH family. The glycine cleavage system is composed of four proteins: P, T, L and H. The cofactor is (R)-lipoate.

The glycine cleavage system catalyzes the degradation of glycine. The H protein shuttles the methylamine group of glycine from the P protein to the T protein. The polypeptide is Glycine cleavage system H protein (Alkaliphilus oremlandii (strain OhILAs) (Clostridium oremlandii (strain OhILAs))).